The following is a 199-amino-acid chain: Large ribosomal subunit protein bL25 (199 aa).

Belongs to the bacterial ribosomal protein bL25 family. CTC subfamily. Part of the 50S ribosomal subunit; part of the 5S rRNA/L5/L18/L25 subcomplex. Contacts the 5S rRNA. Binds to the 5S rRNA independently of L5 and L18.

Functionally, this is one of the proteins that binds to the 5S RNA in the ribosome where it forms part of the central protuberance. This chain is Large ribosomal subunit protein bL25, found in Chloroherpeton thalassium (strain ATCC 35110 / GB-78).